The sequence spans 106 residues: Cytochrome c oxidase assembly factor 3 homolog, mitochondrial (106 aa).

Positions 1–34 are disordered; it reads MASSGAGDPLDSKRGEAPFAQRIDPTREKLTPEQ. The residue at position 2 (alanine 2) is an N-acetylalanine. Residues 2-57 lie on the Mitochondrial matrix side of the membrane; it reads ASSGAGDPLDSKRGEAPFAQRIDPTREKLTPEQLHSMRQAELAQWQKVLPRRRTRN. A helical membrane pass occupies residues 58–78; that stretch reads IVTGLGIGALVLAIYGYTFYS. Residues 78-104 adopt a coiled-coil conformation; sequence SISQERFLDELEDEAKAARARALARAS. Residues 79–106 lie on the Mitochondrial intermembrane side of the membrane; that stretch reads ISQERFLDELEDEAKAARARALARASGS.

It belongs to the COA3 family. Along with COX14, core component of the MITRAC (mitochondrial translation regulation assembly intermediate of cytochrome c oxidase complex) complex. Interacts with MT-CO1/COX1, SMIM20, SURF1 and TIMM21.

It is found in the mitochondrion inner membrane. In terms of biological role, core component of the MITRAC (mitochondrial translation regulation assembly intermediate of cytochrome c oxidase complex) complex, that regulates cytochrome c oxidase assembly. MITRAC complexes regulate both translation of mitochondrial encoded components and assembly of nuclear-encoded components imported in mitochondrion. Required for efficient translation of MT-CO1 and mitochondrial respiratory chain complex IV assembly. This is Cytochrome c oxidase assembly factor 3 homolog, mitochondrial (COA3) from Homo sapiens (Human).